A 284-amino-acid chain; its full sequence is ELMO domain-containing protein B (284 aa).

The region spanning 124-276 is the ELMO domain; sequence EHEASLERLW…EFETKISQNS (153 aa).

In Dictyostelium discoideum (Social amoeba), this protein is ELMO domain-containing protein B (elmoB).